We begin with the raw amino-acid sequence, 113 residues long: U11-theraphotoxin-Hhn1a (113 aa).

The first 21 residues, 1–21, serve as a signal peptide directing secretion; the sequence is MNTVRVTFLLVFVLAVSLGQA. Residues 22–74 constitute a propeptide that is removed on maturation; the sequence is DKDENRMEMQEKTEQGNSYLDFAENLPLQKLEELEAKLLEEDSEESRNSRQKR. Residues 60–69 show a composition bias toward basic and acidic residues; it reads LEEDSEESRN. The disordered stretch occupies residues 60–83; it reads LEEDSEESRNSRQKRCIGEGVPCD. Intrachain disulfides connect Cys-75–Cys-90, Cys-82–Cys-95, and Cys-89–Cys-110.

It belongs to the neurotoxin 14 (magi-1) family. 01 (HNTX-16) subfamily. In terms of tissue distribution, expressed by the venom gland.

Its subcellular location is the secreted. In terms of biological role, probable ion channel inhibitor. The chain is U11-theraphotoxin-Hhn1a from Cyriopagopus hainanus (Chinese bird spider).